Here is a 122-residue protein sequence, read N- to C-terminus: Small ribosomal subunit protein uS13 (122 aa).

Residues 92-122 (HRKQLPVRGQRTHTNARTRKGKAKPIAGKKK) are disordered.

The protein belongs to the universal ribosomal protein uS13 family. In terms of assembly, part of the 30S ribosomal subunit. Forms a loose heterodimer with protein S19. Forms two bridges to the 50S subunit in the 70S ribosome.

Its function is as follows. Located at the top of the head of the 30S subunit, it contacts several helices of the 16S rRNA. In the 70S ribosome it contacts the 23S rRNA (bridge B1a) and protein L5 of the 50S subunit (bridge B1b), connecting the 2 subunits; these bridges are implicated in subunit movement. Contacts the tRNAs in the A and P-sites. The chain is Small ribosomal subunit protein uS13 from Methylobacterium radiotolerans (strain ATCC 27329 / DSM 1819 / JCM 2831 / NBRC 15690 / NCIMB 10815 / 0-1).